Consider the following 186-residue polypeptide: ADP-ribosylation factor-like protein 8B-A (186 aa).

The segment at residues 1–19 (MLALINRLLDWFKSLFWKE) is an intramembrane region (note=Mediates targeting to membranes). GTP contacts are provided by residues 29–35 (QYSGKTT), 71–75 (DIGGQ), and 130–133 (NKRD).

This sequence belongs to the small GTPase superfamily. Arf family.

It localises to the late endosome membrane. The protein localises to the lysosome membrane. Its subcellular location is the cytoplasm. It is found in the cytoskeleton. The protein resides in the spindle. It localises to the early endosome membrane. In terms of biological role, small GTPase which cycles between active GTP-bound and inactive GDP-bound states. In its active state, binds to a variety of effector proteins playing a key role in the regulation of lysosomal positioning which is important for nutrient sensing, natural killer cell-mediated cytotoxicity and antigen presentation. Along with its effectors, orchestrates lysosomal transport and fusion. The polypeptide is ADP-ribosylation factor-like protein 8B-A (arl8ba) (Danio rerio (Zebrafish)).